The chain runs to 156 residues: 6,7-dimethyl-8-ribityllumazine synthase (156 aa).

Residues phenylalanine 23, 57–59 (SWE), and 81–83 (AVV) each bind 5-amino-6-(D-ribitylamino)uracil. Residue 86–87 (ET) coordinates (2S)-2-hydroxy-3-oxobutyl phosphate. Histidine 89 (proton donor) is an active-site residue. Phenylalanine 114 contributes to the 5-amino-6-(D-ribitylamino)uracil binding site. Arginine 128 serves as a coordination point for (2S)-2-hydroxy-3-oxobutyl phosphate.

Belongs to the DMRL synthase family.

It catalyses the reaction (2S)-2-hydroxy-3-oxobutyl phosphate + 5-amino-6-(D-ribitylamino)uracil = 6,7-dimethyl-8-(1-D-ribityl)lumazine + phosphate + 2 H2O + H(+). Its pathway is cofactor biosynthesis; riboflavin biosynthesis; riboflavin from 2-hydroxy-3-oxobutyl phosphate and 5-amino-6-(D-ribitylamino)uracil: step 1/2. Its function is as follows. Catalyzes the formation of 6,7-dimethyl-8-ribityllumazine by condensation of 5-amino-6-(D-ribitylamino)uracil with 3,4-dihydroxy-2-butanone 4-phosphate. This is the penultimate step in the biosynthesis of riboflavin. The sequence is that of 6,7-dimethyl-8-ribityllumazine synthase from Salinibacter ruber (strain DSM 13855 / M31).